Consider the following 59-residue polypeptide: Large ribosomal subunit protein bL32 (59 aa).

The tract at residues 1–25 is disordered; that stretch reads MAVQQNKKSPSKRGMHRSHDFLNAA.

It belongs to the bacterial ribosomal protein bL32 family.

The sequence is that of Large ribosomal subunit protein bL32 from Paraburkholderia phymatum (strain DSM 17167 / CIP 108236 / LMG 21445 / STM815) (Burkholderia phymatum).